A 653-amino-acid polypeptide reads, in one-letter code: Fidgetin-like protein 2 (653 aa).

Disordered regions lie at residues methionine 1–proline 36, alanine 86–leucine 129, and tyrosine 216–proline 240. The span at proline 10 to serine 27 shows a compositional bias: polar residues. The segment covering glutamate 97–proline 107 has biased composition (pro residues). A compositionally biased stretch (gly residues) spans lysine 119–leucine 129. Positions leucine 219–proline 240 are enriched in pro residues. ATP contacts are provided by residues alanine 395 and glycine 435–leucine 440.

It belongs to the AAA ATPase family. Mg(2+) is required as a cofactor.

Its subcellular location is the cytoplasm. It localises to the cell cortex. It carries out the reaction ATP + H2O = ADP + phosphate + H(+). Functionally, microtubule-severing enzyme that negatively regulates cell migration and wound healing. In migrating cells, targets dynamic microtubules (MTs) at the leading edge and severs them, thereby suppressing motility. Microtubule severing releases ARHGEF2 which activates RHOA, which in turn regulates focal ahesion turnover via focal adhesion kinase, as opposed to F-actin polymerization, to suppress cell motility. Negative regulator of axon regeneration that suppresses axonal growth by selectively severing dynamic MTs in the distal axon shaft and growth cone. Contributes to proper cell branching during endothelial and neuronal development. This is Fidgetin-like protein 2 from Homo sapiens (Human).